A 786-amino-acid polypeptide reads, in one-letter code: Pentatricopeptide repeat-containing protein 10, chloroplastic (786 aa).

The tract at residues 1–71 (MEATGRGLFP…HQTPTPPHSF (71 aa)) is disordered. The transit peptide at 1–95 (MEATGRGLFP…HPLPTLAAFL (95 aa)) directs the protein to the chloroplast. Residues 27–36 (PAAPPPPSPS) show a composition bias toward pro residues. A compositionally biased stretch (low complexity) spans 37-50 (SLPLDSLLLHLTAP). PPR repeat units follow at residues 137 to 167 (DASALEMVVRALGREGQHDAVCALLDETPLP), 173 to 207 (DVRAYTTVLHALSRAGRYERALELFAELRRQGVAP), 208 to 243 (TLVTYNVVLDVYGRMGRSWPRIVALLDEMRAAGVEP), 244 to 278 (DGFTASTVIAACCRDGLVDEAVAFFEDLKARGHAP), 279 to 313 (CVVTYNALLQVFGKAGNYTEALRVLGEMEQNGCQP), 314 to 348 (DAVTYNELAGTYARAGFFEEAARCLDTMASKGLLP), 349 to 383 (NAFTYNTVMTAYGNVGKVDEALALFDQMKKTGFVP), 384 to 418 (NVNTYNLVLGMLGKKSRFTVMLEMLGEMSRSGCTP), 419 to 453 (NRVTWNTMLAVCGKRGMEDYVTRVLEGMRSCGVEL), 454 to 488 (SRDTYNTLIAAYGRCGSRTNAFKMYNEMTSAGFTP), 489 to 523 (CITTYNALLNVLSRQGDWSTAQSIVSKMRTKGFKP), 524 to 558 (NEQSYSLLLQCYAKGGNVAGIAAIENEVYGSGAVF), 560 to 594 (SWVILRTLVIANFKCRRLDGMETAFQEVKARGYNP), 595 to 629 (DLVIFNSMLSIYAKNGMYSKATEVFDSIKRSGLSP), 630 to 664 (DLITYNSLMDMYAKCSESWEAEKILNQLKCSQTMK), 666 to 700 (DVVSYNTVINGFCKQGLVKEAQRVLSEMVADGMAP), 701 to 735 (CAVTYHTLVGGYSSLEMFSEAREVIGYMVQHGLKP), and 736 to 770 (MELTYRRVVESYCRAKRFEEARGFLSEVSETDLDF).

This sequence belongs to the PPR family. P subfamily. Forms homodimers.

The protein resides in the plastid. It localises to the chloroplast stroma. Functionally, involved in chloroplast mRNA stability. Binds specifically to two intergenic RNA regions of similar sequence located in the chloroplast atpH 5'-UTR and psaJ 3'-UTR, and serves as a barrier to RNA decay. Binding to a specific site in the intergenic region of the chloroplast atpH is sufficient to block 5'-3' and 3'-5' exonucleases. Acts as a protein barrier to block mRNA degradation by exonucleases, and defines processed mRNA termini in chloroplasts. Remodels the structure of the atpH ribosome-binding site in a manner that can account for its ability to enhance translation. Stabilizes a RNA 3'-end downstream from psaI. Binds atpH RNA as a monomer. This chain is Pentatricopeptide repeat-containing protein 10, chloroplastic, found in Zea mays (Maize).